Consider the following 111-residue polypeptide: UPF0145 protein BRADO6695 (111 aa).

The protein belongs to the UPF0145 family.

This Bradyrhizobium sp. (strain ORS 278) protein is UPF0145 protein BRADO6695.